Consider the following 437-residue polypeptide: Cytochrome c biogenesis protein Ccs1 (437 aa).

The next 3 helical transmembrane spans lie at 23-43, 82-102, and 168-188; these read LQFS…GTII, TWWF…CSLS, and LAPI…VLGL.

This sequence belongs to the Ccs1/CcsB family. As to quaternary structure, may interact with CcsA.

The protein localises to the plastid. It localises to the chloroplast thylakoid membrane. Required during biogenesis of c-type cytochromes (cytochrome c6 and cytochrome f) at the step of heme attachment. This chain is Cytochrome c biogenesis protein Ccs1, found in Porphyra purpurea (Red seaweed).